Consider the following 460-residue polypeptide: Allantoinase (460 aa).

Residues histidine 70, histidine 72, lysine 157, histidine 193, histidine 250, and aspartate 323 each contribute to the Zn(2+) site. An N6-carboxylysine modification is found at lysine 157.

The protein belongs to the metallo-dependent hydrolases superfamily. Allantoinase family. Homotetramer. The cofactor is Zn(2+). Carboxylation allows a single lysine to coordinate two zinc ions.

It catalyses the reaction (S)-allantoin + H2O = allantoate + H(+). Its pathway is nitrogen metabolism; (S)-allantoin degradation; allantoate from (S)-allantoin: step 1/1. Catalyzes the conversion of allantoin (5-ureidohydantoin) to allantoic acid by hydrolytic cleavage of the five-member hydantoin ring. Involved in the utilization of purines as secondary nitrogen sources, when primary sources are limiting. The polypeptide is Allantoinase (DAL1) (Saccharomyces cerevisiae (strain ATCC 204508 / S288c) (Baker's yeast)).